A 175-amino-acid polypeptide reads, in one-letter code: Transcriptional repressor NrdR (175 aa).

Residues 3 to 32 fold into a zinc finger; that stretch reads CPYCSHPDTKVIDSRDVDDGVRRRRECVVC. The 91-residue stretch at 47–137 folds into the ATP-cone domain; the sequence is LFVVKKDQRR…VYREFTDITQ (91 aa).

The protein belongs to the NrdR family. Requires Zn(2+) as cofactor.

In terms of biological role, negatively regulates transcription of bacterial ribonucleotide reductase nrd genes and operons by binding to NrdR-boxes. This Dehalococcoides mccartyi (strain ATCC BAA-2266 / KCTC 15142 / 195) (Dehalococcoides ethenogenes (strain 195)) protein is Transcriptional repressor NrdR.